A 352-amino-acid polypeptide reads, in one-letter code: MARAAGLRALVGIEAAGRGRRVAASPSPGGTPAASRGLPGWPGFCGVGCGSSSSSSFAPPRMQARRAAGSAARTRSPSQSNGWITGGSASEDGRLSWDYSSFKGRRPSMEDRFSIKMTTINEQTVSLFGVFDGHGGSLAAEYLKEHLFENLVNHPELLRDTKLAISQTFLKTDADFLESVSSNPFRDDGSTAVTAILVGNHLYVGNVGDSRVVALKAGKAVPLSEDHKPNRKDEQKRIEDAGGIVVFDDTWRVNGLLAMSRAFGNRALKHYVKAEPDIQEKVVDESLEYLILATDGLWDVMRNEDAVSLLKAQDGPKAAAMKLTEVAHSRLTLDNITCIVLQFHHGKSTNSN.

Disordered stretches follow at residues 18 to 37 (RGRR…ASRG) and 53 to 87 (SSSS…ITGG). 2 stretches are compositionally biased toward low complexity: residues 23–37 (AASP…ASRG) and 53–75 (SSSS…ARTR). The 248-residue stretch at 96 to 343 (SWDYSSFKGR…DNITCIVLQF (248 aa)) folds into the PPM-type phosphatase domain. Aspartate 132, glycine 133, aspartate 295, and aspartate 334 together coordinate Mn(2+).

This sequence belongs to the PP2C family. It depends on Mg(2+) as a cofactor. The cofactor is Mn(2+).

The catalysed reaction is O-phospho-L-seryl-[protein] + H2O = L-seryl-[protein] + phosphate. The enzyme catalyses O-phospho-L-threonyl-[protein] + H2O = L-threonyl-[protein] + phosphate. The chain is Probable protein phosphatase 2C 56 from Oryza sativa subsp. japonica (Rice).